Here is a 184-residue protein sequence, read N- to C-terminus: Shikimate kinase (184 aa).

15 to 20 (GAGKTS) contributes to the ATP binding site. Threonine 19 contributes to the Mg(2+) binding site. Aspartate 37, arginine 61, and glycine 83 together coordinate substrate. Arginine 123 serves as a coordination point for ATP. Arginine 142 lines the substrate pocket.

The protein belongs to the shikimate kinase family. As to quaternary structure, monomer. Requires Mg(2+) as cofactor.

It localises to the cytoplasm. The enzyme catalyses shikimate + ATP = 3-phosphoshikimate + ADP + H(+). The protein operates within metabolic intermediate biosynthesis; chorismate biosynthesis; chorismate from D-erythrose 4-phosphate and phosphoenolpyruvate: step 5/7. In terms of biological role, catalyzes the specific phosphorylation of the 3-hydroxyl group of shikimic acid using ATP as a cosubstrate. The polypeptide is Shikimate kinase (Coxiella burnetii (strain CbuK_Q154) (Coxiella burnetii (strain Q154))).